Consider the following 102-residue polypeptide: Putative defensin-like protein 298 (102 aa).

Positions 1–29 are cleaved as a signal peptide; the sequence is MSASKATMLILFALFLSDILLVSIPRAEA. 6 disulfides stabilise this stretch: Cys35–Cys53, Cys41–Cys58, Cys46–Cys60, Cys74–Cys93, Cys80–Cys98, and Cys86–Cys100.

It belongs to the DEFL family.

It localises to the secreted. In Arabidopsis thaliana (Mouse-ear cress), this protein is Putative defensin-like protein 298.